The sequence spans 371 residues: Histidinol-phosphate aminotransferase (371 aa).

Lysine 222 bears the N6-(pyridoxal phosphate)lysine mark.

Belongs to the class-II pyridoxal-phosphate-dependent aminotransferase family. Histidinol-phosphate aminotransferase subfamily. As to quaternary structure, homodimer. Pyridoxal 5'-phosphate is required as a cofactor.

The enzyme catalyses L-histidinol phosphate + 2-oxoglutarate = 3-(imidazol-4-yl)-2-oxopropyl phosphate + L-glutamate. It participates in amino-acid biosynthesis; L-histidine biosynthesis; L-histidine from 5-phospho-alpha-D-ribose 1-diphosphate: step 7/9. The chain is Histidinol-phosphate aminotransferase from Anoxybacillus flavithermus (strain DSM 21510 / WK1).